A 487-amino-acid chain; its full sequence is NADH-quinone oxidoreductase subunit N (487 aa).

Transmembrane regions (helical) follow at residues 8–28 (LIAM…MLSI), 35–55 (FINA…LYFV), 78–98 (GLVI…LVGY), 104–124 (EFYL…SANH), 125–145 (LASL…LIGY), 159–179 (YMLL…LLYA), 203–223 (ILAG…LVPF), 235–255 (PAPV…AVVM), 271–291 (LVLS…AISQ), 297–317 (LLGY…VAVQ), 328–348 (IGVY…VVSL), 376–396 (AVMT…GFIG), 409–428 (LWWL…YYYL), and 451–471 (ALTA…VLGI).

This sequence belongs to the complex I subunit 2 family. NDH-1 is composed of 13 different subunits. Subunits NuoA, H, J, K, L, M, N constitute the membrane sector of the complex.

It is found in the cell inner membrane. The catalysed reaction is a quinone + NADH + 5 H(+)(in) = a quinol + NAD(+) + 4 H(+)(out). Its function is as follows. NDH-1 shuttles electrons from NADH, via FMN and iron-sulfur (Fe-S) centers, to quinones in the respiratory chain. The immediate electron acceptor for the enzyme in this species is believed to be ubiquinone. Couples the redox reaction to proton translocation (for every two electrons transferred, four hydrogen ions are translocated across the cytoplasmic membrane), and thus conserves the redox energy in a proton gradient. This chain is NADH-quinone oxidoreductase subunit N, found in Yersinia pestis bv. Antiqua (strain Angola).